Reading from the N-terminus, the 301-residue chain is Sulfate adenylyltransferase subunit 2 (301 aa).

Belongs to the PAPS reductase family. CysD subfamily. In terms of assembly, heterodimer composed of CysD, the smaller subunit, and CysN.

The catalysed reaction is sulfate + ATP + H(+) = adenosine 5'-phosphosulfate + diphosphate. The protein operates within sulfur metabolism; hydrogen sulfide biosynthesis; sulfite from sulfate: step 1/3. Its function is as follows. With CysN forms the ATP sulfurylase (ATPS) that catalyzes the adenylation of sulfate producing adenosine 5'-phosphosulfate (APS) and diphosphate, the first enzymatic step in sulfur assimilation pathway. APS synthesis involves the formation of a high-energy phosphoric-sulfuric acid anhydride bond driven by GTP hydrolysis by CysN coupled to ATP hydrolysis by CysD. In Citrifermentans bemidjiense (strain ATCC BAA-1014 / DSM 16622 / JCM 12645 / Bem) (Geobacter bemidjiensis), this protein is Sulfate adenylyltransferase subunit 2.